The chain runs to 40 residues: Ostricacin-3 (40 aa).

Cystine bridges form between Cys-8-Cys-36, Cys-15-Cys-30, and Cys-20-Cys-37.

It is found in the secreted. Has antibacterial activity against the Gram-positive bacterium S.aureus 1056 MRSA (MIC=2.78 ug/ml) and the Gram-negative bacterium E.coli O157:H7 (MIC=2.41 ug/ml). Does not have antifungal activity against the yeast C.albicans 3153A. This Struthio camelus (Common ostrich) protein is Ostricacin-3.